Here is a 381-residue protein sequence, read N- to C-terminus: Tetraacyldisaccharide 4'-kinase (381 aa).

78–85 (AVGGTGKT) is a binding site for ATP.

Belongs to the LpxK family.

The enzyme catalyses a lipid A disaccharide + ATP = a lipid IVA + ADP + H(+). Its pathway is glycolipid biosynthesis; lipid IV(A) biosynthesis; lipid IV(A) from (3R)-3-hydroxytetradecanoyl-[acyl-carrier-protein] and UDP-N-acetyl-alpha-D-glucosamine: step 6/6. Its function is as follows. Transfers the gamma-phosphate of ATP to the 4'-position of a tetraacyldisaccharide 1-phosphate intermediate (termed DS-1-P) to form tetraacyldisaccharide 1,4'-bis-phosphate (lipid IVA). This is Tetraacyldisaccharide 4'-kinase from Syntrophobacter fumaroxidans (strain DSM 10017 / MPOB).